The following is a 382-amino-acid chain: Flap endonuclease 1-B (382 aa).

The interval 1-104 is N-domain; the sequence is MGIHGLAKLI…GELAKRSERR (104 aa). Asp34 is a Mg(2+) binding site. DNA-binding residues include Arg47 and Arg70. Asp86, Glu158, Glu160, Asp179, and Asp181 together coordinate Mg(2+). The interval 122–253 is I-domain; that stretch reads NIEKFNKRLV…KRAIDLIRQH (132 aa). Glu158 provides a ligand contact to DNA. DNA is bound by residues Gly231 and Asp233. Residue Asp233 participates in Mg(2+) binding. The tract at residues 336 to 344 is interaction with PCNA; sequence TQGRLDDFF. A disordered region spans residues 352-382; the sequence is STKRKEVESKGSTKKKSKTGGTPAGKFKRGK.

Belongs to the XPG/RAD2 endonuclease family. FEN1 subfamily. As to quaternary structure, interacts with PCNA. Three molecules of fen1 bind to one PCNA trimer with each molecule binding to one PCNA monomer. PCNA stimulates the nuclease activity without altering cleavage specificity. Requires Mg(2+) as cofactor. Phosphorylated. Phosphorylation upon DNA damage induces relocalization to the nuclear plasma.

Its subcellular location is the nucleus. It localises to the nucleolus. The protein localises to the nucleoplasm. It is found in the mitochondrion. Its function is as follows. Structure-specific nuclease with 5'-flap endonuclease and 5'-3' exonuclease activities involved in DNA replication and repair. During DNA replication, cleaves the 5'-overhanging flap structure that is generated by displacement synthesis when DNA polymerase encounters the 5'-end of a downstream Okazaki fragment. It enters the flap from the 5'-end and then tracks to cleave the flap base, leaving a nick for ligation. Also involved in the long patch base excision repair (LP-BER) pathway, by cleaving within the apurinic/apyrimidinic (AP) site-terminated flap. Acts as a genome stabilization factor that prevents flaps from equilibrating into structures that lead to duplications and deletions. Also possesses 5'-3' exonuclease activity on nicked or gapped double-stranded DNA, and exhibits RNase H activity. Also involved in replication and repair of rDNA and in repairing mitochondrial DNA. The protein is Flap endonuclease 1-B (fen1-b) of Xenopus laevis (African clawed frog).